The chain runs to 2037 residues: Protein SWOLLEN 1 (2037 aa).

11 disordered regions span residues 141–179, 454–487, 504–531, 567–637, 686–705, 837–893, 1011–1045, 1148–1197, 1729–1748, 1793–1812, and 1841–2037; these read VEPGQTSHERSLSKEETVNLQPNPSVDDTPGESSVVKTD, REGGVSKKSDNEGSARTSNLEQSMELPVNANDRD, SVGYVSGGSTSELAESESQSDSIPTDKS, KTSS…KDAV, SLPILGSEAGKDGQEEDNTA, VGSP…SGGK, ATPETPLQSRPGKTETPSAGHTNSKESSGTNPMIP, KHVQ…ESGP, SGETISSSHEGDTPKEKRPR, KSTREENKPDPLRMKRTGLQ, and EAST…QSKK. Over residues 147–157 the composition is skewed to basic and acidic residues; that stretch reads SHERSLSKEET. Residues 158–176 are compositionally biased toward polar residues; that stretch reads VNLQPNPSVDDTPGESSVV. Residues 454–466 show a composition bias toward basic and acidic residues; sequence REGGVSKKSDNEG. The span at 504-514 shows a compositional bias: low complexity; the sequence is SVGYVSGGSTS. A compositionally biased stretch (polar residues) spans 515-526; that stretch reads ELAESESQSDSI. Residues 841–852 show a composition bias toward low complexity; sequence STSSLDKTAAKS. Positions 853 to 865 are enriched in basic residues; it reads SKAKSERKPRRTS. Polar residues-rich tracts occupy residues 1025 to 1041 and 1151 to 1171; these read ETPSAGHTNSKESSGTN and QSGTSSNVSKVTPTLEPTSTV. Residues 1179 to 1189 show a composition bias toward basic residues; that stretch reads TRVKSRKRKKM. Residues 1794–1805 show a composition bias toward basic and acidic residues; it reads STREENKPDPLR. Composition is skewed to polar residues over residues 1874–1886, 1942–1964, and 2013–2023; these read KTISIEKQTTISR, EEQTTSSSHDTGSKNSSSLSTNK, and LQTSMMTSKIP. Residues 2028–2037 show a composition bias toward basic residues; it reads SKSHLSQSKK.

In terms of assembly, interacts with importin alpha IMPA1 and IMPA2, required for nuclear-localized proteins import. Mainly expressed in seedlings, flower buds and stems, and, to a lower extent, in leaves and siliques.

It localises to the nucleus. Its function is as follows. Under salt stress, appears to prevent the accumulation of reactive oxygen species (ROS) in roots and required for the maintenance of cell wall integrity (cellulose, pectin and lignin composition) by interacting with importin alpha (e.g. IMPA1 and IMPA2) and binding to the promoter of several ROS- and cell wall-related genes to regulate their expression. Necessary for cells organization in meristems and root elongation zones as well as for root elongation in high salinity, but not upon osmotic stress. The sequence is that of Protein SWOLLEN 1 from Arabidopsis thaliana (Mouse-ear cress).